The primary structure comprises 735 residues: Muskelin (735 aa).

The residue at position 2 (A2) is an N-acetylalanine. The 33-residue stretch at 172–204 (REQEAIRLCLKHFRQHNYTEAFESLQKKTKIAL) folds into the LisH domain. In terms of domain architecture, CTLH spans 206 to 258 (HPMLTDIHDKLVLKGDFDACEELIEKAVNDGLFNQYISQQEYKPRWSQIIPKS). 6 Kelch repeats span residues 284-330 (TVYL…SCHK), 339-391 (QIYT…FDHQ), 408-458 (ILTC…SRIG), 469-515 (CLYV…TGFT), 526-578 (EIHV…SLQE), and 597-651 (VHYL…AQMD).

As to quaternary structure, homodimer; may form higher oligomers. Identified in the CTLH complex that contains GID4, RANBP9 and/or RANBP10, MKLN1, MAEA, RMND5A (or alternatively its paralog RMND5B), GID8, ARMC8, WDR26 and YPEL5. Within this complex, MAEA, RMND5A (or alternatively its paralog RMND5B), GID8, WDR26, and RANBP9 and/or RANBP10 form the catalytic core, while GID4, MKLN1, ARMC8 and YPEL5 have ancillary roles. Interacts with RANBP9. Part of a complex consisting of RANBP9, MKLN1 and GID8. Interacts with GABRA1. Interacts with the C-terminal tail of PTGER3.

It localises to the cytoplasm. The protein resides in the cytosol. The protein localises to the nucleus. Its subcellular location is the nucleoplasm. It is found in the cell projection. It localises to the ruffle. The protein resides in the cell cortex. The protein localises to the synapse. Its subcellular location is the postsynapse. Component of the CTLH E3 ubiquitin-protein ligase complex that selectively accepts ubiquitin from UBE2H and mediates ubiquitination and subsequent proteasomal degradation of the transcription factor HBP1. Required for internalization of the GABA receptor GABRA1 from the cell membrane via endosomes and subsequent GABRA1 degradation. Acts as a mediator of cell spreading and cytoskeletal responses to the extracellular matrix component THBS1. The protein is Muskelin (MKLN1) of Pongo abelii (Sumatran orangutan).